Consider the following 153-residue polypeptide: Xanthine-guanine phosphoribosyltransferase (153 aa).

Residues 37 to 38, Arg69, and 88 to 96 each bind 5-phospho-alpha-D-ribose 1-diphosphate; these read RG and DDLVDTGGT. Arg69 serves as a coordination point for GMP. Residue Asp89 participates in Mg(2+) binding. Guanine-binding residues include Asp92 and Ile135. The xanthine site is built by Asp92 and Ile135. GMP-binding positions include 92 to 96 and 134 to 135; these read DTGGT and WI.

This sequence belongs to the purine/pyrimidine phosphoribosyltransferase family. XGPT subfamily. Homotetramer. Requires Mg(2+) as cofactor.

It localises to the cell inner membrane. The enzyme catalyses GMP + diphosphate = guanine + 5-phospho-alpha-D-ribose 1-diphosphate. It catalyses the reaction XMP + diphosphate = xanthine + 5-phospho-alpha-D-ribose 1-diphosphate. The catalysed reaction is IMP + diphosphate = hypoxanthine + 5-phospho-alpha-D-ribose 1-diphosphate. It functions in the pathway purine metabolism; GMP biosynthesis via salvage pathway; GMP from guanine: step 1/1. The protein operates within purine metabolism; XMP biosynthesis via salvage pathway; XMP from xanthine: step 1/1. In terms of biological role, purine salvage pathway enzyme that catalyzes the transfer of the ribosyl-5-phosphate group from 5-phospho-alpha-D-ribose 1-diphosphate (PRPP) to the N9 position of the 6-oxopurines guanine and xanthine to form the corresponding ribonucleotides GMP (guanosine 5'-monophosphate) and XMP (xanthosine 5'-monophosphate), with the release of PPi. To a lesser extent, also acts on hypoxanthine. The polypeptide is Xanthine-guanine phosphoribosyltransferase (Proteus mirabilis (strain HI4320)).